Here is a 249-residue protein sequence, read N- to C-terminus: Serine 3-dehydrogenase (249 aa).

6–30 (LITGATSGFGQATARRFVKEGWKVI) is a binding site for NADP(+). Ser135 serves as a coordination point for substrate. Tyr148 (proton acceptor) is an active-site residue.

It belongs to the short-chain dehydrogenases/reductases (SDR) family. As to quaternary structure, homotetramer.

The enzyme catalyses L-serine + NADP(+) = aminoacetaldehyde + CO2 + NADPH. In terms of biological role, catalyzes the oxidation of the hydroxyl group of serine to form 2-aminomalonate semialdehyde which is spontaneously converted into 2-aminoacetaldehyde and CO(2). Also acts on D-serine, L-glycerate, D-glycerate and 2-methyl-DL-serine. Does not act on O-methyl-DL-serine and L-threonine. This chain is Serine 3-dehydrogenase (sdh), found in Agrobacterium fabrum (strain C58 / ATCC 33970) (Agrobacterium tumefaciens (strain C58)).